Reading from the N-terminus, the 308-residue chain is uncharacterized protein (308 aa).

Residues 158–221 are disordered; it reads GDSNAETFEE…DSINHGESSE (64 aa). The segment covering 206-221 has biased composition (basic and acidic residues); the sequence is RNGDRSDSINHGESSE.

This is an uncharacterized protein from Arabidopsis thaliana (Mouse-ear cress).